Consider the following 259-residue polypeptide: Bacillaene synthase dehydratase PksH (259 aa).

Residues aspartate 68 and glutamate 137 contribute to the active site.

It belongs to the enoyl-CoA hydratase/isomerase family.

The protein localises to the cytoplasm. It participates in antibiotic biosynthesis; bacillaene biosynthesis. Functionally, involved in some intermediate steps for the synthesis of the antibiotic polyketide bacillaene which is involved in secondary metabolism. Catalyzes the dehydration of the (S)-3-hydroxy-3-methylglutaryl group tethered to PksL to a 3-methylglutaconyl moiety. The chain is Bacillaene synthase dehydratase PksH (pksH) from Bacillus subtilis (strain 168).